The sequence spans 711 residues: BCLAF1 and THRAP3 family member 3 (711 aa).

Residues 1–15 are compositionally biased toward basic residues; that stretch reads MARSRSRSPRWKHRS. Disordered regions lie at residues 1 to 42 and 48 to 67; these read MARS…YRKD and AWRM…PSRG. Phosphoserine occurs at positions 15 and 17. Residues 48–57 show a composition bias toward basic and acidic residues; that stretch reads AWRMDSEKHG. S78, S80, and S187 each carry phosphoserine. 2 disordered regions span residues 94 to 350 and 371 to 404; these read KPHR…KDSI and EKIK…PSPI. Basic and acidic residues-rich tracts occupy residues 163 to 197, 204 to 213, 220 to 242, 296 to 311, 318 to 349, and 371 to 383; these read FRFE…DFET, RYPEDRDFRK, RPKD…KPEH, SDGR…DRKY, LNRE…KKDS, and EKIK…RKES. K400 is covalently cross-linked (Glycyl lysine isopeptide (Lys-Gly) (interchain with G-Cter in SUMO2)). Phosphoserine is present on residues S402 and S578.

This sequence belongs to the BCLAF1/THRAP3 family.

It localises to the mitochondrion. The protein is BCLAF1 and THRAP3 family member 3 of Homo sapiens (Human).